The primary structure comprises 976 residues: Vacuolar membrane protease (976 aa).

Residues 1 to 15 are Cytoplasmic-facing; the sequence is MKLKSVFRSVLKYRK. A helical transmembrane segment spans residues 16-36; that stretch reads TNLSLLLLITYSIITLLYIFD. Residues 37-359 lie on the Vacuolar side of the membrane; sequence HERYKLNLPK…KFFVISAKTL (323 aa). Asn96 and Asn121 each carry an N-linked (GlcNAc...) asparagine glycan. His156 and Asp168 together coordinate Zn(2+). A glycan (N-linked (GlcNAc...) asparagine) is linked at Asn189. The active-site Proton acceptor is the Glu200. A Zn(2+)-binding site is contributed by Glu201. Residue Asn217 is glycosylated (N-linked (GlcNAc...) asparagine). 2 residues coordinate Zn(2+): Glu226 and His300. Residues 360-380 traverse the membrane as a helical segment; the sequence is FYWNCIFLLVSPVVAIGLYLI. The Cytoplasmic portion of the chain corresponds to 381 to 392; the sequence is SRDRMTWKSYSW. A helical membrane pass occupies residues 393–412; it reads LSWTRFPLSLAAGIIVQKLF. Residues 413-428 lie on the Vacuolar side of the membrane; it reads SNDIIRSNPLTFSRNY. The chain crosses the membrane as a helical span at residues 429 to 449; the sequence is FWPISAFFTQVIFTSYVLINC. Topologically, residues 450 to 461 are cytoplasmic; sequence SNFFFPCADMKS. Residues 462–482 traverse the membrane as a helical segment; the sequence is LSIIELFIILWTILLFTSKLL. At 483–496 the chain is on the vacuolar side; it reads YSSDYRYTGLYPLS. Residues 497–517 form a helical membrane-spanning segment; it reads IFFLLSTIAAILRLLALALGM. The Cytoplasmic segment spans residues 518–627; the sequence is RTRKRLGREC…NSLKLEYTDY (110 aa). The interval 528 to 610 is disordered; that stretch reads RDHHSNYSSH…PLLKGSNSME (83 aa). Over residues 549 to 558 the composition is skewed to polar residues; the sequence is NLEQPQDQLT. Positions 559–570 are enriched in low complexity; it reads SSQDDQASIQDD. The segment covering 582–601 has biased composition (basic and acidic residues); sequence NVDEDHGMDSSSQQHDERVP. The chain crosses the membrane as a helical span at residues 628-648; the sequence is AWIIQFLLIVPIPSFILFNSV. At 649–668 the chain is on the vacuolar side; it reads DVIMDALNHTVQEGSKATFD. Residue Asn656 is glycosylated (N-linked (GlcNAc...) asparagine). The chain crosses the membrane as a helical span at residues 669 to 689; it reads VLRFGMVGSILIALPILPFFY. Over 690–692 the chain is Cytoplasmic; the sequence is KVN. The chain crosses the membrane as a helical span at residues 693-713; sequence YITISLTALLFLISASKTLLV. Residues 714-976 lie on the Vacuolar side of the membrane; that stretch reads HPFTNSNPLK…LVIVKDAIIL (263 aa). Residues Asn768, Asn796, Asn811, Asn866, and Asn937 are each glycosylated (N-linked (GlcNAc...) asparagine).

The protein belongs to the peptidase M28 family. Zn(2+) is required as a cofactor. Post-translationally, N-glycosylated.

It is found in the vacuole membrane. In terms of biological role, may be involved in vacuolar sorting and osmoregulation. The sequence is that of Vacuolar membrane protease from Saccharomyces cerevisiae (strain ATCC 204508 / S288c) (Baker's yeast).